The sequence spans 332 residues: Glycerol-3-phosphate dehydrogenase [NAD(P)+] (332 aa).

NADPH contacts are provided by Trp-11, Arg-30, and Lys-108. Residues Lys-108, Gly-137, and Ser-139 each contribute to the sn-glycerol 3-phosphate site. Position 141 (Ala-141) interacts with NADPH. Residues Lys-192, Asp-245, Ser-255, Arg-256, and Asn-257 each contribute to the sn-glycerol 3-phosphate site. The active-site Proton acceptor is the Lys-192. Arg-256 serves as a coordination point for NADPH. Positions 280 and 282 each coordinate NADPH.

This sequence belongs to the NAD-dependent glycerol-3-phosphate dehydrogenase family.

The protein resides in the cytoplasm. It catalyses the reaction sn-glycerol 3-phosphate + NAD(+) = dihydroxyacetone phosphate + NADH + H(+). It carries out the reaction sn-glycerol 3-phosphate + NADP(+) = dihydroxyacetone phosphate + NADPH + H(+). The protein operates within membrane lipid metabolism; glycerophospholipid metabolism. Its function is as follows. Catalyzes the reduction of the glycolytic intermediate dihydroxyacetone phosphate (DHAP) to sn-glycerol 3-phosphate (G3P), the key precursor for phospholipid synthesis. The protein is Glycerol-3-phosphate dehydrogenase [NAD(P)+] of Burkholderia orbicola (strain AU 1054).